A 359-amino-acid polypeptide reads, in one-letter code: Histidinol-phosphate aminotransferase 1 (359 aa).

Lysine 216 carries the post-translational modification N6-(pyridoxal phosphate)lysine.

The protein belongs to the class-II pyridoxal-phosphate-dependent aminotransferase family. Histidinol-phosphate aminotransferase subfamily. Homodimer. The cofactor is pyridoxal 5'-phosphate.

It catalyses the reaction L-histidinol phosphate + 2-oxoglutarate = 3-(imidazol-4-yl)-2-oxopropyl phosphate + L-glutamate. The protein operates within amino-acid biosynthesis; L-histidine biosynthesis; L-histidine from 5-phospho-alpha-D-ribose 1-diphosphate: step 7/9. This Caulobacter vibrioides (strain ATCC 19089 / CIP 103742 / CB 15) (Caulobacter crescentus) protein is Histidinol-phosphate aminotransferase 1 (hisC1).